Consider the following 406-residue polypeptide: Arginine deiminase (406 aa).

Cysteine 396 acts as the Amidino-cysteine intermediate in catalysis.

Belongs to the arginine deiminase family.

The protein resides in the cytoplasm. The enzyme catalyses L-arginine + H2O = L-citrulline + NH4(+). It functions in the pathway amino-acid degradation; L-arginine degradation via ADI pathway; carbamoyl phosphate from L-arginine: step 1/2. This Vibrio campbellii (strain ATCC BAA-1116) protein is Arginine deiminase.